A 254-amino-acid polypeptide reads, in one-letter code: Diphthine synthase (254 aa).

S-adenosyl-L-methionine-binding positions include leucine 11, aspartate 87, isoleucine 90, 115–116 (SV), leucine 167, leucine 208, and histidine 233.

Belongs to the diphthine synthase family. Homodimer.

The catalysed reaction is 2-[(3S)-amino-3-carboxypropyl]-L-histidyl-[translation elongation factor 2] + 3 S-adenosyl-L-methionine = diphthine-[translation elongation factor 2] + 3 S-adenosyl-L-homocysteine + 3 H(+). Its pathway is protein modification; peptidyl-diphthamide biosynthesis. S-adenosyl-L-methionine-dependent methyltransferase that catalyzes the trimethylation of the amino group of the modified target histidine residue in translation elongation factor 2 (EF-2), to form an intermediate called diphthine. The three successive methylation reactions represent the second step of diphthamide biosynthesis. This chain is Diphthine synthase, found in Metallosphaera sedula (strain ATCC 51363 / DSM 5348 / JCM 9185 / NBRC 15509 / TH2).